The following is a 299-amino-acid chain: MITFLYIFFSILIMVLFVLGNFANGFIALVNFIDWVKRKKISSADQILTALAVSRIGLLWTLLLNWYLTVLNPAFYSVELRITSYNAWVVTNHFSMWLAASLSIFYLLKIANFSNLIFLHLKRRVRSVILVILLGTLIFLVCHLLVANMDESMWAEEYEGNITGKMKLRNTVHLSYLTVTTLWSFIPFTLSLISFLMLICSLCKHLKKMQLHGEGSQDLSTKVHIKALQTLISFLLLCAIFFLFLIISVWSPRRLRNDPVVMVSKAVGNIYLAFDSFILIWRTKKLKHTFLLILCQIRC.

M1 is a topological domain (extracellular). The helical transmembrane segment at 2 to 22 threads the bilayer; the sequence is ITFLYIFFSILIMVLFVLGNF. Over 23–55 the chain is Cytoplasmic; sequence ANGFIALVNFIDWVKRKKISSADQILTALAVSR. The chain crosses the membrane as a helical span at residues 56 to 76; the sequence is IGLLWTLLLNWYLTVLNPAFY. At 77 to 87 the chain is on the extracellular side; it reads SVELRITSYNA. A helical membrane pass occupies residues 88–108; the sequence is WVVTNHFSMWLAASLSIFYLL. At 109–126 the chain is on the cytoplasmic side; that stretch reads KIANFSNLIFLHLKRRVR. A helical transmembrane segment spans residues 127 to 147; sequence SVILVILLGTLIFLVCHLLVA. Residues 148–181 are Extracellular-facing; it reads NMDESMWAEEYEGNITGKMKLRNTVHLSYLTVTT. N-linked (GlcNAc...) asparagine glycosylation is present at N161. Residues 182 to 202 form a helical membrane-spanning segment; it reads LWSFIPFTLSLISFLMLICSL. Topologically, residues 203 to 229 are cytoplasmic; sequence CKHLKKMQLHGEGSQDLSTKVHIKALQ. Residues 230-250 traverse the membrane as a helical segment; sequence TLISFLLLCAIFFLFLIISVW. The Extracellular portion of the chain corresponds to 251-259; the sequence is SPRRLRNDP. Residues 260 to 280 form a helical membrane-spanning segment; it reads VVMVSKAVGNIYLAFDSFILI. Over 281 to 299 the chain is Cytoplasmic; the sequence is WRTKKLKHTFLLILCQIRC.

It belongs to the G-protein coupled receptor T2R family.

The protein localises to the membrane. Its function is as follows. Receptor that may play a role in the perception of bitterness and is gustducin-linked. May play a role in sensing the chemical composition of the gastrointestinal content. The activity of this receptor may stimulate alpha gustducin, mediate PLC-beta-2 activation and lead to the gating of TRPM5. In Pan paniscus (Pygmy chimpanzee), this protein is Taste receptor type 2 member 50 (TAS2R50).